We begin with the raw amino-acid sequence, 225 residues long: Probable methylthioribulose-1-phosphate dehydratase (225 aa).

Cys86 is a binding site for substrate. Zn(2+) contacts are provided by His104 and His106. The active-site Proton donor/acceptor is the Glu127. His183 contacts Zn(2+).

Belongs to the aldolase class II family. MtnB subfamily. The cofactor is Zn(2+).

Its subcellular location is the cytoplasm. The enzyme catalyses 5-(methylsulfanyl)-D-ribulose 1-phosphate = 5-methylsulfanyl-2,3-dioxopentyl phosphate + H2O. The protein operates within amino-acid biosynthesis; L-methionine biosynthesis via salvage pathway; L-methionine from S-methyl-5-thio-alpha-D-ribose 1-phosphate: step 2/6. Functionally, catalyzes the dehydration of methylthioribulose-1-phosphate (MTRu-1-P) into 2,3-diketo-5-methylthiopentyl-1-phosphate (DK-MTP-1-P). The protein is Probable methylthioribulose-1-phosphate dehydratase of Leishmania infantum.